The chain runs to 474 residues: Bifunctional protein HldE (474 aa).

Residues 1–317 (MKLSMPRFDQ…RRAIQRSEGS (317 aa)) are ribokinase. An ATP-binding site is contributed by 194–197 (NLSE). The active site involves aspartate 263. A cytidylyltransferase region spans residues 343–474 (FTNGCFDILH…AIVEKIRNNE (132 aa)).

It in the N-terminal section; belongs to the carbohydrate kinase PfkB family. In the C-terminal section; belongs to the cytidylyltransferase family. Homodimer.

It catalyses the reaction D-glycero-beta-D-manno-heptose 7-phosphate + ATP = D-glycero-beta-D-manno-heptose 1,7-bisphosphate + ADP + H(+). The enzyme catalyses D-glycero-beta-D-manno-heptose 1-phosphate + ATP + H(+) = ADP-D-glycero-beta-D-manno-heptose + diphosphate. The protein operates within nucleotide-sugar biosynthesis; ADP-L-glycero-beta-D-manno-heptose biosynthesis; ADP-L-glycero-beta-D-manno-heptose from D-glycero-beta-D-manno-heptose 7-phosphate: step 1/4. It participates in nucleotide-sugar biosynthesis; ADP-L-glycero-beta-D-manno-heptose biosynthesis; ADP-L-glycero-beta-D-manno-heptose from D-glycero-beta-D-manno-heptose 7-phosphate: step 3/4. Functionally, catalyzes the phosphorylation of D-glycero-D-manno-heptose 7-phosphate at the C-1 position to selectively form D-glycero-beta-D-manno-heptose-1,7-bisphosphate. In terms of biological role, catalyzes the ADP transfer from ATP to D-glycero-beta-D-manno-heptose 1-phosphate, yielding ADP-D-glycero-beta-D-manno-heptose. In Pseudomonas fluorescens (strain SBW25), this protein is Bifunctional protein HldE.